The chain runs to 574 residues: MAVEENNMPVVSQQPQAGEDVISSLSKDSHLSAQSQKYSNDELKAGESGSEGSQSVPIEIPKKPMSEYVTVSLLCLCVAFGGFMFGWDTGTISGFVVQTDFLRRFGMKHKDGTHYLSNVRTGLIVAIFNIGCAFGGIILSKGGDMYGRKKGLSIVVSVYIVGIIIQIASINKWYQYFIGRIISGLGVGGIAVLCPMLISEIAPKHLRGTLVSCYQLMITAGIFLGYCTNYGTKSYSNSVQWRVPLGLCFAWSLFMIGALTLVPESPRYLCEVNKVEDAKRSIAKSNKVSPEDPAVQAELDLIMAGIEAEKLAGNASWGELFSTKTKVFQRLLMGVFVQMFQQLTGNNYFFYYGTVIFKSVGLDDSFETSIVIGVVNFASTFFSLWTVENLGHRKCLLLGAATMMACMVIYASVGVTRLYPHGKSQPSSKGAGNCMIVFTCFYIFCYATTWAPVAWVITAESFPLRVKSKCMALASASNWVWGFLIAFFTPFITSAINFYYGYVFMGCLVAMFFYVFFFVPETKGLSLEEIQELWEEGVLPWKSEGWIPSSRRGNNYDLEDLQHDDKPWYKAMLE.

A disordered region spans residues 1–57; it reads MAVEENNMPVVSQQPQAGEDVISSLSKDSHLSAQSQKYSNDELKAGESGSEGSQSVP. The Cytoplasmic portion of the chain corresponds to 1-70; sequence MAVEENNMPV…PKKPMSEYVT (70 aa). Polar residues predominate over residues 23 to 38; the sequence is SSLSKDSHLSAQSQKY. Phosphoserine occurs at positions 32, 35, 39, 48, 50, 53, and 55. The chain crosses the membrane as a helical span at residues 71-91; that stretch reads VSLLCLCVAFGGFMFGWDTGT. Topologically, residues 92-121 are extracellular; sequence ISGFVVQTDFLRRFGMKHKDGTHYLSNVRT. A helical transmembrane segment spans residues 122 to 142; the sequence is GLIVAIFNIGCAFGGIILSKG. The Cytoplasmic segment spans residues 143–149; the sequence is GDMYGRK. The helical transmembrane segment at 150-170 threads the bilayer; sequence KGLSIVVSVYIVGIIIQIASI. Over 171–175 the chain is Extracellular; the sequence is NKWYQ. The helical transmembrane segment at 176-196 threads the bilayer; it reads YFIGRIISGLGVGGIAVLCPM. The Cytoplasmic segment spans residues 197-207; the sequence is LISEIAPKHLR. The chain crosses the membrane as a helical span at residues 208–228; it reads GTLVSCYQLMITAGIFLGYCT. The Extracellular segment spans residues 229–242; sequence NYGTKSYSNSVQWR. A helical membrane pass occupies residues 243–263; it reads VPLGLCFAWSLFMIGALTLVP. Over 264-342 the chain is Cytoplasmic; it reads ESPRYLCEVN…MGVFVQMFQQ (79 aa). The chain crosses the membrane as a helical span at residues 343–362; the sequence is LTGNNYFFYYGTVIFKSVGL. Residues 363–366 lie on the Extracellular side of the membrane; it reads DDSF. Residues 367 to 387 form a helical membrane-spanning segment; the sequence is ETSIVIGVVNFASTFFSLWTV. Topologically, residues 388–394 are cytoplasmic; sequence ENLGHRK. Residues 395–415 traverse the membrane as a helical segment; the sequence is CLLLGAATMMACMVIYASVGV. The Extracellular segment spans residues 416 to 435; the sequence is TRLYPHGKSQPSSKGAGNCM. The helical transmembrane segment at 436-456 threads the bilayer; it reads IVFTCFYIFCYATTWAPVAWV. Residues 457-472 are Cytoplasmic-facing; it reads ITAESFPLRVKSKCMA. A helical membrane pass occupies residues 473-493; it reads LASASNWVWGFLIAFFTPFIT. Residues 494–499 are Extracellular-facing; sequence SAINFY. Residues 500-520 traverse the membrane as a helical segment; that stretch reads YGYVFMGCLVAMFFYVFFFVP. At 521–574 the chain is on the cytoplasmic side; it reads ETKGLSLEEIQELWEEGVLPWKSEGWIPSSRRGNNYDLEDLQHDDKPWYKAMLE.

The protein belongs to the major facilitator superfamily. Sugar transporter (TC 2.A.1.1) family.

It localises to the membrane. In terms of biological role, GAL2 is a facilitated diffusion transporter required for both the high-affinity galactokinase-dependent and low-affinity galactokinase-independent galactose transport processes. This is Galactose transporter (GAL2) from Saccharomyces cerevisiae (strain ATCC 204508 / S288c) (Baker's yeast).